The sequence spans 56 residues: Large ribosomal subunit protein bL32 (56 aa).

Residues 1–16 (MAVQKSKKSRSMRGMR) show a composition bias toward basic residues. Residues 1–33 (MAVQKSKKSRSMRGMRRSHDALTTSAVSVDATS) are disordered. The span at 21–33 (ALTTSAVSVDATS) shows a compositional bias: polar residues.

The protein belongs to the bacterial ribosomal protein bL32 family.

This chain is Large ribosomal subunit protein bL32, found in Aliivibrio fischeri (strain ATCC 700601 / ES114) (Vibrio fischeri).